The following is a 209-amino-acid chain: Large ribosomal subunit protein uL3 (209 aa).

The disordered stretch occupies residues 133–153 (THGNSLSHRAPGSIGQNQTPG). At Gln150 the chain carries N5-methylglutamine.

The protein belongs to the universal ribosomal protein uL3 family. In terms of assembly, part of the 50S ribosomal subunit. Forms a cluster with proteins L14 and L19. Methylated by PrmB.

Functionally, one of the primary rRNA binding proteins, it binds directly near the 3'-end of the 23S rRNA, where it nucleates assembly of the 50S subunit. This is Large ribosomal subunit protein uL3 from Pectobacterium atrosepticum (strain SCRI 1043 / ATCC BAA-672) (Erwinia carotovora subsp. atroseptica).